The sequence spans 228 residues: Ribosomal RNA small subunit methyltransferase G (228 aa).

S-adenosyl-L-methionine contacts are provided by residues G89, L94, 140-141, and R159; that span reads VE.

This sequence belongs to the methyltransferase superfamily. RNA methyltransferase RsmG family.

The protein resides in the cytoplasm. It catalyses the reaction guanosine(527) in 16S rRNA + S-adenosyl-L-methionine = N(7)-methylguanosine(527) in 16S rRNA + S-adenosyl-L-homocysteine. Its function is as follows. Specifically methylates the N7 position of guanine in position 527 of 16S rRNA. The chain is Ribosomal RNA small subunit methyltransferase G from Burkholderia lata (strain ATCC 17760 / DSM 23089 / LMG 22485 / NCIMB 9086 / R18194 / 383).